A 348-amino-acid chain; its full sequence is Histidinol-phosphate aminotransferase (348 aa).

An N6-(pyridoxal phosphate)lysine modification is found at K210.

Belongs to the class-II pyridoxal-phosphate-dependent aminotransferase family. Histidinol-phosphate aminotransferase subfamily. Homodimer. Requires pyridoxal 5'-phosphate as cofactor.

The enzyme catalyses L-histidinol phosphate + 2-oxoglutarate = 3-(imidazol-4-yl)-2-oxopropyl phosphate + L-glutamate. It participates in amino-acid biosynthesis; L-histidine biosynthesis; L-histidine from 5-phospho-alpha-D-ribose 1-diphosphate: step 7/9. This is Histidinol-phosphate aminotransferase from Pseudomonas putida (strain W619).